The chain runs to 245 residues: MQHEPEDQTFQLQALEICEPDSSFDPQKPPESGEEYLMHMFYERKRCPAVVTKRSSKIRNNTGNTTLEMLDNPELPPFKCLLPTPEWRDEQVKSFQAARSQVLVLRKELANNNYDQSGEPPLTSDQEKWKEFCRNQQPLLSTLLHLTQNDLELLLEMLSKWLQDPNTTVDLLHDVWLARWLYATLVCLHLPLEPHVFSTLRYIARTCIHLRNQLKEDEVQRAAPYNLLLTLTVQVFAQNDFKDYI.

It belongs to the gemin-2 family. Component of the core survival motor neuron (SMN) complex composed of Smn, Gem2, Gem3, rig/Gem5 and one of 3 almost identical Gem4 paralogs encoded by Glos/Gem4a, Gem4b or Gem4c. Part of a minimal SMN complex composed of Smn and Gem2 only; this complex is active in UsnRNP assembly. The SMN complex associates with the entire set of spliceosomal snRNP Sm proteins, SmB, SmD1, SmD2, SmD3, SmE, SmF and SmG, and with the snRNP-specific proteins snRNP-U1-70K, U2A, snf/U1A and U5-116KD. Expressed in nurse cells and oocytes.

It localises to the cytoplasm. Its subcellular location is the U-body. In terms of biological role, component of the survival motor neuron (SMN) complex that catalyzes the assembly of small nuclear ribonucleoproteins (snRNPs), the building blocks of the spliceosome, and thereby plays an important role in the splicing of cellular pre-mRNAs. Most spliceosomal snRNPs contain a common set of Sm proteins SNRPB, SNRPD1, SNRPD2, SNRPD3, SNRPE, SNRPF and SNRPG that assemble in a heptameric protein ring on the Sm site of the small nuclear RNA to form the core snRNP (Sm core). In the cytosol, the Sm proteins SNRPD1, SNRPD2, SNRPE, SNRPF and SNRPG (5Sm) are trapped in an inactive 6S pICln-Sm complex by the chaperone CLNS1A that controls the assembly of the core snRNP. To assemble core snRNPs, the SMN complex accepts the trapped 5Sm proteins from CLNS1A. Binding of snRNA inside 5Sm ultimately triggers eviction of the SMN complex, thereby allowing binding of SNRPD3 and SNRPB to complete assembly of the core snRNP. Within the SMN complex, GEMIN2 constrains the conformation of 5Sm, thereby promoting 5Sm binding to snRNA containing the snRNP code (a nonameric Sm site and a 3'-adjacent stem-loop), thus preventing progression of assembly until a cognate substrate is bound. Involved in adult motor function. The chain is Gem-associated protein 2 from Drosophila melanogaster (Fruit fly).